Consider the following 1519-residue polypeptide: Rho guanine nucleotide exchange factor 40 (1519 aa).

2 disordered regions span residues 194–237 (VGHQ…PVEG) and 253–503 (RGSP…LETV). Over residues 200–218 (TLPPELPSGPPGLPSPPLP) the composition is skewed to pro residues. A Phosphoserine modification is found at Ser-262. Residues 280 to 290 (KGRHRRHRAWM) are compositionally biased toward basic residues. A compositionally biased stretch (low complexity) spans 314 to 341 (ASPESPPGAEAVPEAAVLEVSEPPAEAV). Gly residues predominate over residues 355 to 367 (LRGGGGGGQGAEG). Thr-371 bears the Phosphothreonine mark. Residues 374 to 386 (RTGKGNRRKKRAA) are compositionally biased toward basic residues. The residue at position 419 (Ser-419) is a Phosphoserine. The span at 421–457 (SEHKLPECHLVKEEYEGSGKPESEPKELKTAGEKEPQ) shows a compositional bias: basic and acidic residues. The stretch at 828 to 871 (SAEVQERLAQAREALALEENATSQKVLDIFEQRLEQVESGLHRA) forms a coiled coil. Residues Ser-931 and Ser-961 each carry the phosphoserine modification. Residues 934-961 (ALREWGRCQARCQELERRIQQHVGEEAS) adopt a coiled-coil conformation. The disordered stretch occupies residues 955–1031 (HVGEEASPRG…ELAPEAEGRP (77 aa)). Over residues 980–996 (WGPRSPSPSLSSLLLPS) the composition is skewed to low complexity. Phosphoserine is present on Ser-1082. In terms of domain architecture, DH spans 1085 to 1253 (AQQRLVSELI…REQEARGRDL (169 aa)). Positions 1265 to 1372 (DLKEQGQLLH…WTSSIAQLLW (108 aa)) constitute a PH domain. Residues Ser-1433, Ser-1438, and Ser-1474 each carry the phosphoserine modification. The tract at residues 1466–1519 (TLDSSGDVSPGPRNSPSLQPPHPGSSTPTLASRGILGLSRQSHARALSDPTTPL) is disordered. Positions 1467–1482 (LDSSGDVSPGPRNSPS) are enriched in polar residues. Residue Thr-1492 is modified to Phosphothreonine.

In terms of tissue distribution, expressed at higher level in the central nervous system and skeletal muscle and greater abundance in fetal than adult brain (at protein level).

Its subcellular location is the cytoplasm. Functionally, may act as a guanine nucleotide exchange factor (GEF). This is Rho guanine nucleotide exchange factor 40 (ARHGEF40) from Homo sapiens (Human).